The primary structure comprises 70 residues: Protein FlmC homolog (70 aa).

The disordered stretch occupies residues 1–21; it reads MSSPHQDSLLPRFAQGEEGHE.

The chain is Protein FlmC homolog from Escherichia coli.